A 146-amino-acid chain; its full sequence is MAVNREDFQEAIVKIGRVTKVVKGGRRFRFTALVVVGDKNGTVGFGTGKAKEVPDAIKKALDDAFKSLVTVSIKGTTIAHDIEHKYNASKILLRPASEGTGLIAGGAARPVLELSGVKDIIAKSLGSNNPNNLVQATVEALAKIKG.

The S5 DRBM domain occupies 8 to 71 (FQEAIVKIGR…DDAFKSLVTV (64 aa)).

Belongs to the universal ribosomal protein uS5 family. Part of the 30S ribosomal subunit. Contacts proteins S4 and S8.

Its function is as follows. With S4 and S12 plays an important role in translational accuracy. Located at the back of the 30S subunit body where it stabilizes the conformation of the head with respect to the body. The sequence is that of Small ribosomal subunit protein uS5 from Aliarcobacter butzleri (strain RM4018) (Arcobacter butzleri).